The sequence spans 475 residues: Ribulose bisphosphate carboxylase large chain (475 aa).

The propeptide occupies 1 to 2 (MS). An N-acetylproline modification is found at Pro-3. Lys-14 carries the N6,N6,N6-trimethyllysine modification. Residues Asn-123 and Thr-173 each contribute to the substrate site. The active-site Proton acceptor is Lys-175. Lys-177 is a binding site for substrate. Lys-201, Asp-203, and Glu-204 together coordinate Mg(2+). The residue at position 201 (Lys-201) is an N6-carboxylysine. Catalysis depends on His-294, which acts as the Proton acceptor. Residues Arg-295, His-327, and Ser-379 each coordinate substrate.

It belongs to the RuBisCO large chain family. Type I subfamily. Heterohexadecamer of 8 large chains and 8 small chains; disulfide-linked. The disulfide link is formed within the large subunit homodimers. Mg(2+) is required as a cofactor. Post-translationally, the disulfide bond which can form in the large chain dimeric partners within the hexadecamer appears to be associated with oxidative stress and protein turnover.

It localises to the plastid. The protein resides in the chloroplast. The enzyme catalyses 2 (2R)-3-phosphoglycerate + 2 H(+) = D-ribulose 1,5-bisphosphate + CO2 + H2O. It carries out the reaction D-ribulose 1,5-bisphosphate + O2 = 2-phosphoglycolate + (2R)-3-phosphoglycerate + 2 H(+). RuBisCO catalyzes two reactions: the carboxylation of D-ribulose 1,5-bisphosphate, the primary event in carbon dioxide fixation, as well as the oxidative fragmentation of the pentose substrate in the photorespiration process. Both reactions occur simultaneously and in competition at the same active site. The chain is Ribulose bisphosphate carboxylase large chain from Pinus edulis (Pinyon pine).